Here is a 751-residue protein sequence, read N- to C-terminus: Adhesive plaque matrix protein (751 aa).

The signal sequence occupies residues methionine 1 to glycine 20. The segment at phenylalanine 21 to alanine 41 is nonrepetitive linker. 55 repeat units span residues tyrosine 109–threonine 118, tyrosine 119–threonine 128, tyrosine 129–threonine 138, tyrosine 139–serine 148, tyrosine 149–threonine 158, tyrosine 159–threonine 168, tyrosine 169–threonine 178, tyrosine 179–threonine 188, tyrosine 189–serine 198, tyrosine 199–serine 208, tyrosine 209–threonine 218, tyrosine 219–threonine 228, tyrosine 229–isoleucine 238, tyrosine 239–serine 248, tyrosine 249–threonine 258, tyrosine 259–threonine 268, tyrosine 269–serine 278, tyrosine 279–threonine 288, tyrosine 289–threonine 298, tyrosine 299–threonine 308, tyrosine 309–threonine 318, tyrosine 319–threonine 328, tyrosine 329–threonine 338, tyrosine 339–serine 348, tyrosine 349–serine 358, tyrosine 359–threonine 368, tyrosine 369–isoleucine 378, tyrosine 379–threonine 388, tyrosine 389–threonine 398, tyrosine 399–threonine 408, tyrosine 409–threonine 418, tyrosine 419–threonine 428, tyrosine 429–threonine 438, tyrosine 439–threonine 448, tyrosine 449–threonine 458, tyrosine 459–threonine 468, tyrosine 469–threonine 478, tyrosine 479–threonine 488, tyrosine 489–threonine 498, tyrosine 499–threonine 508, tyrosine 509–threonine 518, tyrosine 519–threonine 528, tyrosine 529–threonine 538, tyrosine 539–threonine 548, tyrosine 549–threonine 558, tyrosine 559–threonine 568, tyrosine 569–threonine 578, tyrosine 579–threonine 588, tyrosine 589–threonine 598, tyrosine 599–threonine 608, tyrosine 609–threonine 618, tyrosine 619–threonine 628, tyrosine 629–threonine 638, tyrosine 639–threonine 648, and tyrosine 649–threonine 658. A 63 X 10 AA tandem repeats of Y-[KR]-[APTS]-K-[KPMSLTIVA]-[STR]-Y-[PLS]-[PASRQT]-[STI] region spans residues tyrosine 109–threonine 732. The segment covering threonine 158–proline 167 has biased composition (low complexity). The segment at threonine 158–tyrosine 359 is disordered. A compositionally biased stretch (pro residues) spans threonine 168–serine 184. Residues tyrosine 185–lysine 262 are compositionally biased toward low complexity. Low complexity-rich tracts occupy residues threonine 288–proline 343 and lysine 350–tyrosine 359. The segment at proline 397–proline 636 is disordered. Residues serine 444–proline 486 show a composition bias toward low complexity. The stretch at tyrosine 659–threonine 662 is one 56; truncated repeat. A disordered region spans residues proline 660 to tyrosine 751. Over residues threonine 662 to proline 677 the composition is skewed to low complexity. Repeat copies occupy residues tyrosine 663–threonine 672, tyrosine 673–threonine 682, tyrosine 683–threonine 692, tyrosine 693–serine 702, tyrosine 703–threonine 712, tyrosine 713–isoleucine 722, and tyrosine 723–threonine 732. Pro residues predominate over residues serine 678–proline 690. Positions proline 691–proline 721 are enriched in low complexity.

Post-translationally, hydroxylated on proline (mono- or dihydroxylation) and tyrosine residues (to L-DOPA = 3',4'-dihydroxyphenylalanine) of the tandem repeats. In terms of tissue distribution, produced by the byssal gland.

The protein localises to the secreted. Functionally, provides adhesiveness to the mussel's foot. Mussels produce one of the strongest water insoluble glues. The mussel's adhesive is a bundle of threads, called a byssus, formed by a fibrous collagenous core coated with adhesive proteins. The sequence is that of Adhesive plaque matrix protein (FP1) from Mytilus galloprovincialis (Mediterranean mussel).